The sequence spans 93 residues: Secretoglobin family 3A member 2 (93 aa).

The first 21 residues, methionine 1 to alanine 21, serve as a signal peptide directing secretion.

The protein belongs to the secretoglobin family. UGRP subfamily. In terms of assembly, homodimer; disulfide-linked. Monomer. Interacts with APOA1. Highly expressed in lung and trachea. Detected throughout the airway epithelium in lung, with slightly higher expression in large airways. Found in lung submucosal gland acinus where it localizes to serous-like cells. Probably expressed in club cells of the bronchioles. Not detected in other tissues tested.

It is found in the secreted. Its function is as follows. Secreted cytokine-like protein. Binds to the scavenger receptor MARCO. Can also bind to pathogens including the Gram-positive bacterium L.monocytogenes, the Gram-negative bacterium P.aeruginosa, and yeast. Strongly inhibits phospholipase A2 (PLA2G1B) activity. Seems to have anti-inflammatory effects in respiratory epithelium. Also has anti-fibrotic activity in lung. May play a role in fetal lung development and maturation. Promotes branching morphogenesis during early stages of lung development. In the pituitary, may inhibit production of follicle-stimulating hormone (FSH) and luteinizing hormone (LH). In Homo sapiens (Human), this protein is Secretoglobin family 3A member 2 (SCGB3A2).